Consider the following 212-residue polypeptide: ATP phosphoribosyltransferase (212 aa).

This sequence belongs to the ATP phosphoribosyltransferase family. Short subfamily. As to quaternary structure, heteromultimer composed of HisG and HisZ subunits.

Its subcellular location is the cytoplasm. It catalyses the reaction 1-(5-phospho-beta-D-ribosyl)-ATP + diphosphate = 5-phospho-alpha-D-ribose 1-diphosphate + ATP. The protein operates within amino-acid biosynthesis; L-histidine biosynthesis; L-histidine from 5-phospho-alpha-D-ribose 1-diphosphate: step 1/9. Its function is as follows. Catalyzes the condensation of ATP and 5-phosphoribose 1-diphosphate to form N'-(5'-phosphoribosyl)-ATP (PR-ATP). Has a crucial role in the pathway because the rate of histidine biosynthesis seems to be controlled primarily by regulation of HisG enzymatic activity. The protein is ATP phosphoribosyltransferase of Prochlorococcus marinus (strain MIT 9515).